A 303-amino-acid polypeptide reads, in one-letter code: Probable cell division protein WhiA (303 aa).

The segment at residues Ser-272–Leu-303 is a DNA-binding region (H-T-H motif).

It belongs to the WhiA family.

Functionally, involved in cell division and chromosome segregation. The chain is Probable cell division protein WhiA from Streptococcus pneumoniae (strain Hungary19A-6).